Here is a 196-residue protein sequence, read N- to C-terminus: MASSKELIEENCYVALTHEHLDAKVMMDKVRSPKAGAIVLFAGTTRDNFGGKPVKELQYTSYEPRALQSMLSICKTILHKHSLTSIAMIHRLGVVPIGEESILITVSSPHRQAAWRAGEEALEECKEKVEVWKKEEFGGEEGGIWRANRDGAVGERVDEDEEKKKPDMGPHGPILRPSRPGERGHGPVVRNHQLGS.

Residues 110 to 111, K126, and 133 to 135 each bind substrate; these read HR and KKE. A disordered region spans residues 142–196; sequence GGIWRANRDGAVGERVDEDEEKKKPDMGPHGPILRPSRPGERGHGPVVRNHQLGS. Residues 147–168 show a composition bias toward basic and acidic residues; sequence ANRDGAVGERVDEDEEKKKPDM.

It belongs to the MoaE family. MOCS2B subfamily. As to quaternary structure, heterotetramer; composed of 2 small (MOCS2A) and 2 large (MOCS2B) subunits.

The protein resides in the cytoplasm. It catalyses the reaction 2 [molybdopterin-synthase sulfur-carrier protein]-C-terminal-Gly-aminoethanethioate + cyclic pyranopterin phosphate + H2O = molybdopterin + 2 [molybdopterin-synthase sulfur-carrier protein]-C-terminal Gly-Gly + 2 H(+). It functions in the pathway cofactor biosynthesis; molybdopterin biosynthesis. Catalytic subunit of the molybdopterin synthase complex, a complex that catalyzes the conversion of precursor Z into molybdopterin. Acts by mediating the incorporation of 2 sulfur atoms from thiocarboxylated MOCS2A into precursor Z to generate a dithiolene group. The chain is Molybdopterin synthase catalytic subunit from Sclerotinia sclerotiorum (strain ATCC 18683 / 1980 / Ss-1) (White mold).